The chain runs to 1106 residues: MDGDDLIASVYRKIEREKALITAASNMRQSTDNPLVQQRVDANIRDGRKNIAYLEEKMRELQLRQMKQEGASPTDKRLPPNPDGSAPVPPPKDYAPGYSGHEREYGDASGAYPHGGAGTMPSGAPFADPRPFAPVPKARPNYTKLDLIKYDTPYLGPKIQLMLSQLEFKLSVEKQYKAGIEKMVRLYQDEGDRKSRQDAEGRRIESNQKIQLLKQALKRYEDLHVDIESAEAPDDESLSTPNLRKPLTGLLTLRIHAVEDVDHAASSRFSRGPETFVVVKVEDAIKARTKATRTDKWQDEPFNIEIDKANEIELTVYDKSGDRPTPIGMLWVRISDIAEEMRRKKIESEFNASGWVSADKMEHGAAHGRQDAGGAPGSSNRPPSGGHSGGPGQGYAGGAPGGASAGPVLIDSWFALEPVGRIHLTLSFAKQLKDRRPFDIGLNRQGAVRQKKEEVHEKQGHKFVTQQFYNIMRCALCGDFLKYAAGMQCADCKYTCHRKCYPKVVTKCISKANYETDPDEEKINHRIPHRFEGFSNISANWCCHCGYLLPFGRKSAKRCTECGLTCHAQCTHLVPDFCGMSMEAANQILETLIRAKNHNKSASVSSGLSGRTLRPGGPPQAPQDNVALAYPQKPVEGAYGAPQRQPSAEAISAATNTYIPPQSPTAAQRQHIPPRTSSSQSPAAAAAAAAAAATGLRTPQQASDPNRPVQPPPSSHAHYDPAAYASYQQAIPPQAMQKMGAPYGMPQQQQQQAVAPMQQQVAVKEEIPPQQPKVRIGLDHFNFLAVLGKGNFGKVMLAETKSTKKLYAIKVLKKEFIIENDEVESTKSEKRVFLIANKERHPFLLNLHACFQTETRVYFVMEYISGGDLMLHIQRGQFGLKRAQFYAAEVLLALKYFHENGVIYRDLKLDNILLTLDGHIKIADYGLCKENMWYGSTTSTFCGTPEFMAPEILLDKKYGRAVDWWAFGVLIYQMLLQQSPFRGEDEDEIYDAILADEPLYPIHMPRDSVSILQKLLTREPELRLGSGPTDAQEVMSHAFFRNINWDDIYHKRVPPPFLPTISSPTDTSNFDQEFTSVTPVLTPVQSVLSQAMQEEFRGFSYTADFA.

The REM-1 1 domain occupies 1–67 (MDGDDLIASV…MRELQLRQMK (67 aa)). The disordered stretch occupies residues 65-138 (QMKQEGASPT…PRPFAPVPKA (74 aa)). Residues 79 to 93 (PPNPDGSAPVPPPKD) show a composition bias toward pro residues. One can recognise an REM-1 2 domain in the interval 149-226 (KYDTPYLGPK…LKRYEDLHVD (78 aa)). In terms of domain architecture, C2 spans 232–350 (APDDESLSTP…MRRKKIESEF (119 aa)). Residues 361–370 (MEHGAAHGRQ) are compositionally biased toward basic and acidic residues. The segment at 361–400 (MEHGAAHGRQDAGGAPGSSNRPPSGGHSGGPGQGYAGGAP) is disordered. A compositionally biased stretch (gly residues) spans 386–400 (GHSGGPGQGYAGGAP). 2 Phorbol-ester/DAG-type zinc fingers span residues 460–508 (GHKF…VTKC) and 528–578 (PHRF…PDFC). 2 stretches are compositionally biased toward polar residues: residues 600–609 (KSASVSSGLS) and 658–668 (YIPPQSPTAAQ). Disordered stretches follow at residues 600–625 (KSAS…PQDN) and 658–719 (YIPP…HAHY). Positions 683-693 (AAAAAAAAAAA) are enriched in low complexity. A Protein kinase domain is found at 781 to 1040 (FNFLAVLGKG…AQEVMSHAFF (260 aa)). ATP contacts are provided by residues 787–795 (LGKGNFGKV) and Lys-810. Catalysis depends on Asp-906, which acts as the Proton acceptor. An AGC-kinase C-terminal domain is found at 1041–1106 (RNINWDDIYH…RGFSYTADFA (66 aa)). At Thr-1082 the chain carries Phosphothreonine. Ser-1100 carries the post-translational modification Phosphoserine. Tyr-1101 is modified (phosphotyrosine).

It belongs to the protein kinase superfamily. AGC Ser/Thr protein kinase family. PKC subfamily. As to quaternary structure, interacts with hsp90.

It catalyses the reaction L-seryl-[protein] + ATP = O-phospho-L-seryl-[protein] + ADP + H(+). It carries out the reaction L-threonyl-[protein] + ATP = O-phospho-L-threonyl-[protein] + ADP + H(+). Functionally, protein kinase C; part of cell wall integrity (CWI) signaling pathway composed of pkcA, the bck1-mkk2-mpka MAPK cascade and the downstream rlmA transcription regulator. The CWI signaling pathway regulates cell wall integrity and pyomelanin formation. CWI also controls oxidative stress response, gliotoxin production, iron adaptation and asexual development. Finally, CWI is constitutively required for A.fumigatus to cope with the temperature increase found in the mammalian lung environment, during infection. Modulates the expression of fumiquinazoline cluster during conidiogenesis. The polypeptide is Protein kinase C (Aspergillus fumigatus (strain ATCC MYA-4609 / CBS 101355 / FGSC A1100 / Af293) (Neosartorya fumigata)).